Reading from the N-terminus, the 183-residue chain is MTATAQQLEFLKNSIKSIQDYPKPGILFRDVTSLLEDPKAYALSIELLVERYKNAGITKVVGTEARGFLFGAPVALGLGVGFVPVRKPRKLPRETIAETYELEYGTDQLEIHVDAIKPGDNVLVVDDLLATGGTIEATVKLIRRLGGKVTDAAFIINLFDLGGEQRLEKQGITCYSLMPFPGH.

The protein belongs to the purine/pyrimidine phosphoribosyltransferase family. As to quaternary structure, homodimer.

It is found in the cytoplasm. It carries out the reaction AMP + diphosphate = 5-phospho-alpha-D-ribose 1-diphosphate + adenine. The protein operates within purine metabolism; AMP biosynthesis via salvage pathway; AMP from adenine: step 1/1. Catalyzes a salvage reaction resulting in the formation of AMP, that is energically less costly than de novo synthesis. The polypeptide is Adenine phosphoribosyltransferase (Salmonella typhi).